The primary structure comprises 89 residues: Small ribosomal subunit protein uS15 (89 aa).

Belongs to the universal ribosomal protein uS15 family. In terms of assembly, part of the 30S ribosomal subunit. Forms a bridge to the 50S subunit in the 70S ribosome, contacting the 23S rRNA.

Its function is as follows. One of the primary rRNA binding proteins, it binds directly to 16S rRNA where it helps nucleate assembly of the platform of the 30S subunit by binding and bridging several RNA helices of the 16S rRNA. Forms an intersubunit bridge (bridge B4) with the 23S rRNA of the 50S subunit in the ribosome. The chain is Small ribosomal subunit protein uS15 from Syntrophomonas wolfei subsp. wolfei (strain DSM 2245B / Goettingen).